Reading from the N-terminus, the 192-residue chain is E3 ubiquitin-protein ligase RNF183 (192 aa).

Over 1–161 the chain is Cytoplasmic; sequence MAEQQGRELE…RECFRNPQFR (161 aa). The RING-type zinc-finger motif lies at 13-60; that stretch reads CPVCWNPFNNTFHTPKMLDCCHSFCVECLAHLSLVTPARRRLLCPLCR. A helical; Anchor for type IV membrane protein transmembrane segment spans residues 162–182; the sequence is IFAYLMAVILSVTLLLIFSIF. Topologically, residues 183–192 are lumenal; that stretch reads WTKQFLWGVG.

In terms of assembly, interacts with FATE1. Interacts with SEC16A. Interacts with BCL2L1. Post-translationally, autoubiquitinated (in vitro). As to expression, kidney and testis.

The protein localises to the endoplasmic reticulum membrane. It is found in the endoplasmic reticulum. It localises to the golgi apparatus. Its subcellular location is the cis-Golgi network membrane. The protein resides in the lysosome membrane. It carries out the reaction S-ubiquitinyl-[E2 ubiquitin-conjugating enzyme]-L-cysteine + [acceptor protein]-L-lysine = [E2 ubiquitin-conjugating enzyme]-L-cysteine + N(6)-ubiquitinyl-[acceptor protein]-L-lysine.. It participates in protein modification; protein ubiquitination. Acts as an E3 ubiquitin ligase catalyzing the covalent attachment of ubiquitin moieties onto substrate proteins. Triggers apoptosis in response to prolonged ER stress by mediating the polyubiquitination and subsequent proteasomal degradation of BCL2L1. May collaborate with FATE1 to restrain BIK protein levels thus regulating apoptotic signaling. This chain is E3 ubiquitin-protein ligase RNF183 (RNF183), found in Homo sapiens (Human).